A 391-amino-acid chain; its full sequence is Chalcone synthase (391 aa).

The active site involves Cys-164.

This sequence belongs to the thiolase-like superfamily. Chalcone/stilbene synthases family.

It carries out the reaction (E)-4-coumaroyl-CoA + 3 malonyl-CoA + 3 H(+) = 2',4,4',6'-tetrahydroxychalcone + 3 CO2 + 4 CoA. It functions in the pathway secondary metabolite biosynthesis; flavonoid biosynthesis. Functionally, the primary product of this enzyme is 4,2',4',6'-tetrahydroxychalcone (also termed naringenin-chalcone or chalcone) which can under specific conditions spontaneously isomerize into naringenin. In Dianthus monspessulanus, this protein is Chalcone synthase (CHS).